Reading from the N-terminus, the 275-residue chain is Elongation factor Ts (275 aa).

The segment at 80–83 (TDFV) is involved in Mg(2+) ion dislocation from EF-Tu.

It belongs to the EF-Ts family.

It localises to the cytoplasm. In terms of biological role, associates with the EF-Tu.GDP complex and induces the exchange of GDP to GTP. It remains bound to the aminoacyl-tRNA.EF-Tu.GTP complex up to the GTP hydrolysis stage on the ribosome. This chain is Elongation factor Ts, found in Clavibacter sepedonicus (Clavibacter michiganensis subsp. sepedonicus).